A 386-amino-acid chain; its full sequence is Galactokinase (386 aa).

35–38 (EHTD) lines the substrate pocket. ATP contacts are provided by residues S69 and 125–131 (GAGLSSS). Mg(2+) is bound by residues S131 and E163. D175 serves as the catalytic Proton acceptor. Substrate is bound at residue Y224.

Belongs to the GHMP kinase family. GalK subfamily.

The protein localises to the cytoplasm. It catalyses the reaction alpha-D-galactose + ATP = alpha-D-galactose 1-phosphate + ADP + H(+). The protein operates within carbohydrate metabolism; galactose metabolism. Functionally, catalyzes the transfer of the gamma-phosphate of ATP to D-galactose to form alpha-D-galactose-1-phosphate (Gal-1-P). The sequence is that of Galactokinase from Vibrio vulnificus (strain CMCP6).